Reading from the N-terminus, the 272-residue chain is MNNSEQLIALKESETAFLKYFNKADYELVDFSVVEKLDWKQLNHEDLQQMGERNFWQHEHQIYAIRNDFTDQLLRYYSMYPTAATKVAYTGLIIRNNEAAVQVGLENYAPSLANVQQSLKLFIQFIQQQLRDNVYFVVLGHYQLLDALLDKSLQTPDILSMIEERNLSGLVTYLSTEHPIVQILKENTQQQLNVLEHYIPNDHPALVELKIWERWLHTQGYKDIHLDITAQPPRSYYTGLFIQCHFAENESRVLTGGYYKGSIEGFGLGLTL.

This sequence belongs to the class-II aminoacyl-tRNA synthetase family. HisZ subfamily. Heteromultimer composed of HisG and HisZ subunits.

Its subcellular location is the cytoplasm. Its pathway is amino-acid biosynthesis; L-histidine biosynthesis; L-histidine from 5-phospho-alpha-D-ribose 1-diphosphate: step 1/9. Required for the first step of histidine biosynthesis. May allow the feedback regulation of ATP phosphoribosyltransferase activity by histidine. This is ATP phosphoribosyltransferase regulatory subunit from Staphylococcus aureus (strain bovine RF122 / ET3-1).